We begin with the raw amino-acid sequence, 398 residues long: Tear acid lipase-like protein (398 aa).

A signal peptide spans 1 to 19 (MSWLLSTMCLVHVCGNIFC). The Nucleophile role is filled by Ser-170. A disulfide bridge connects residues Cys-243 and Cys-252. The N-linked (GlcNAc...) asparagine glycan is linked to Asn-268. Catalysis depends on charge relay system residues Asp-340 and His-369.

Belongs to the AB hydrolase superfamily. Lipase family. As to quaternary structure, monomer. In terms of processing, N-glycosylated. As to expression, expressed in female lacrimal gland acinar cells from where it is secreted into tears (at protein level).

It is found in the secreted. Female-specific protein which lacks detectable lipase activity against a range of substrates. Binds the hydrophobic lipid 1-aminoanthracene with high affinity. The chain is Tear acid lipase-like protein from Mesocricetus auratus (Golden hamster).